The chain runs to 185 residues: dCTP deaminase (185 aa).

DCTP-binding positions include 107–112, 131–133, Gln152, Tyr166, and Gln176; these read KSTYAR and TLE. Glu133 serves as the catalytic Proton donor/acceptor.

Belongs to the dCTP deaminase family. In terms of assembly, homotrimer.

It catalyses the reaction dCTP + H2O + H(+) = dUTP + NH4(+). The protein operates within pyrimidine metabolism; dUMP biosynthesis; dUMP from dCTP (dUTP route): step 1/2. Functionally, catalyzes the deamination of dCTP to dUTP. This is dCTP deaminase from Wolbachia sp. subsp. Brugia malayi (strain TRS).